Reading from the N-terminus, the 128-residue chain is MAYRKLGRTSSQRKAMFRDLTTDLLINESIVTTEARAKEIRKTVEKMITLGKRGNLHARRQAAAFVRNEIASESYDEAKDEYTSTTALQKLFSEIAPRYAERNGGYTRILKTEPRRGDAAPMAIIELV.

The protein belongs to the bacterial ribosomal protein bL17 family. As to quaternary structure, part of the 50S ribosomal subunit. Contacts protein L32.

The protein is Large ribosomal subunit protein bL17 of Streptococcus mutans serotype c (strain ATCC 700610 / UA159).